The following is a 335-amino-acid chain: Dihydroorotate dehydrogenase (quinone) (335 aa).

FMN is bound by residues Ala59–Lys63 and Thr83. Substrate is bound at residue Lys63. Asn108–Phe112 serves as a coordination point for substrate. Residues Asn136 and Asn169 each contribute to the FMN site. Asn169 provides a ligand contact to substrate. Ser172 serves as the catalytic Nucleophile. Residue Asn174 coordinates substrate. FMN contacts are provided by Lys214 and Gly242. Residue Asn243–Thr244 participates in substrate binding. Residues Gly265, Gly294, and Tyr315–Ser316 each bind FMN.

It belongs to the dihydroorotate dehydrogenase family. Type 2 subfamily. Monomer. FMN is required as a cofactor.

The protein resides in the cell membrane. The enzyme catalyses (S)-dihydroorotate + a quinone = orotate + a quinol. The protein operates within pyrimidine metabolism; UMP biosynthesis via de novo pathway; orotate from (S)-dihydroorotate (quinone route): step 1/1. Functionally, catalyzes the conversion of dihydroorotate to orotate with quinone as electron acceptor. The sequence is that of Dihydroorotate dehydrogenase (quinone) from Glaesserella parasuis serovar 5 (strain SH0165) (Haemophilus parasuis).